The chain runs to 202 residues: Adenylyl-sulfate kinase (202 aa).

35 to 42 (GLSGSGKS) lines the ATP pocket. The active-site Phosphoserine intermediate is the Ser109.

Belongs to the APS kinase family.

The catalysed reaction is adenosine 5'-phosphosulfate + ATP = 3'-phosphoadenylyl sulfate + ADP + H(+). Its pathway is sulfur metabolism; hydrogen sulfide biosynthesis; sulfite from sulfate: step 2/3. Catalyzes the synthesis of activated sulfate. In Bacteroides fragilis (strain ATCC 25285 / DSM 2151 / CCUG 4856 / JCM 11019 / LMG 10263 / NCTC 9343 / Onslow / VPI 2553 / EN-2), this protein is Adenylyl-sulfate kinase.